Reading from the N-terminus, the 498-residue chain is Phosphoethanolamine N-methyltransferase 1 (498 aa).

Positions 68, 73, 89, 115, 116, and 134 each coordinate S-adenosyl-L-homocysteine. Residues serine 167, serine 172, glycine 173, arginine 177, and tyrosine 184 each coordinate phosphocholine. N-methylethanolamine phosphate contacts are provided by residues 253-254 (QY) and tyrosine 262. Tyrosine 262 contacts phosphocholine. 7 residues coordinate S-adenosyl-L-homocysteine: valine 271, serine 272, glycine 298, aspartate 320, aspartate 346, cysteine 347, and arginine 363. Phosphocholine is bound by residues tyrosine 394, tyrosine 408, arginine 412, tyrosine 414, and lysine 480. N-methylethanolamine phosphate-binding positions include tyrosine 394, tyrosine 408, 412 to 414 (RGY), and lysine 480.

It belongs to the class I-like SAM-binding methyltransferase superfamily. PEAMT family.

It carries out the reaction phosphoethanolamine + S-adenosyl-L-methionine = N-methylethanolamine phosphate + S-adenosyl-L-homocysteine + H(+). The enzyme catalyses N-methylethanolamine phosphate + S-adenosyl-L-methionine = N,N-dimethylethanolamine phosphate + S-adenosyl-L-homocysteine + H(+). The catalysed reaction is N,N-dimethylethanolamine phosphate + S-adenosyl-L-methionine = phosphocholine + S-adenosyl-L-homocysteine + H(+). The protein operates within phospholipid metabolism; phosphatidylcholine biosynthesis; phosphocholine from phosphoethanolamine: step 1/1. With respect to regulation, inhibited by phosphatidic acid. In terms of biological role, involved in phosphocholine biosynthesis. Catalyzes the N-methylation of phosphoethanolamine, phosphomonomethylethanolamine and phosphodimethylethanolamine, the three methylation steps required to convert phosphoethanolamine to phosphocholine (PC). The polypeptide is Phosphoethanolamine N-methyltransferase 1 (Triticum aestivum (Wheat)).